The sequence spans 80 residues: Large ribosomal subunit protein bL31B (80 aa).

The protein belongs to the bacterial ribosomal protein bL31 family. Type B subfamily. In terms of assembly, part of the 50S ribosomal subunit.

The chain is Large ribosomal subunit protein bL31B from Xanthomonas campestris pv. campestris (strain 8004).